The primary structure comprises 346 residues: 4-hydroxy-3-methylbut-2-enyl diphosphate reductase (346 aa).

Cys-19 is a [4Fe-4S] cluster binding site. (2E)-4-hydroxy-3-methylbut-2-enyl diphosphate contacts are provided by His-48 and His-84. Dimethylallyl diphosphate-binding residues include His-48 and His-84. 2 residues coordinate isopentenyl diphosphate: His-48 and His-84. Cys-106 contacts [4Fe-4S] cluster. His-134 contributes to the (2E)-4-hydroxy-3-methylbut-2-enyl diphosphate binding site. His-134 lines the dimethylallyl diphosphate pocket. His-134 is a binding site for isopentenyl diphosphate. Glu-136 (proton donor) is an active-site residue. Thr-175 serves as a coordination point for (2E)-4-hydroxy-3-methylbut-2-enyl diphosphate. Cys-205 lines the [4Fe-4S] cluster pocket. Residues Ser-233, Ser-234, Asn-235, and Ser-278 each contribute to the (2E)-4-hydroxy-3-methylbut-2-enyl diphosphate site. The dimethylallyl diphosphate site is built by Ser-233, Ser-234, Asn-235, and Ser-278. Isopentenyl diphosphate contacts are provided by Ser-233, Ser-234, Asn-235, and Ser-278.

The protein belongs to the IspH family. The cofactor is [4Fe-4S] cluster.

The enzyme catalyses isopentenyl diphosphate + 2 oxidized [2Fe-2S]-[ferredoxin] + H2O = (2E)-4-hydroxy-3-methylbut-2-enyl diphosphate + 2 reduced [2Fe-2S]-[ferredoxin] + 2 H(+). It carries out the reaction dimethylallyl diphosphate + 2 oxidized [2Fe-2S]-[ferredoxin] + H2O = (2E)-4-hydroxy-3-methylbut-2-enyl diphosphate + 2 reduced [2Fe-2S]-[ferredoxin] + 2 H(+). It functions in the pathway isoprenoid biosynthesis; dimethylallyl diphosphate biosynthesis; dimethylallyl diphosphate from (2E)-4-hydroxy-3-methylbutenyl diphosphate: step 1/1. Its pathway is isoprenoid biosynthesis; isopentenyl diphosphate biosynthesis via DXP pathway; isopentenyl diphosphate from 1-deoxy-D-xylulose 5-phosphate: step 6/6. Catalyzes the conversion of 1-hydroxy-2-methyl-2-(E)-butenyl 4-diphosphate (HMBPP) into a mixture of isopentenyl diphosphate (IPP) and dimethylallyl diphosphate (DMAPP). Acts in the terminal step of the DOXP/MEP pathway for isoprenoid precursor biosynthesis. In Brucella suis biovar 1 (strain 1330), this protein is 4-hydroxy-3-methylbut-2-enyl diphosphate reductase.